The following is a 1685-amino-acid chain: Phosphatidylinositol 4-phosphate 3-kinase C2 domain-containing subunit alpha (1685 aa).

Disordered stretches follow at residues 1 to 33 and 41 to 60; these read MAQI…EALQ and KLQK…LSSS. N-acetylalanine is present on alanine 2. The segment at 2-142 is interaction with clathrin; sufficient to induce clathrin assembly; that stretch reads AQISSNSGFK…FRPTIQRGQW (141 aa). Positions 19-31 are enriched in basic and acidic residues; the sequence is EPTRAKDVDKEEA. Positions 49 to 60 are enriched in polar residues; it reads TDNQRGFELSSS. Serine 60, serine 108, serine 259, serine 327, and serine 338 each carry phosphoserine. The PI3K-RBD domain occupies 419–507; the sequence is NASVKVSIDI…DTEIRLQLLT (89 aa). Serine 628 carries the post-translational modification Phosphoserine. Residues 680-839 enclose the C2 PI3K-type domain; the sequence is TTEQLQFTIF…ERIVLQVDFP (160 aa). In terms of domain architecture, PIK helical spans 859-1035; the sequence is QHNLETLEND…EHVLGALLSV (177 aa). Residues 1103-1381 form the PI3K/PI4K catalytic domain; sequence SIKSCSFFSS…LIESSLGSIA (279 aa). Residues 1109-1115 are G-loop; the sequence is FFSSNAV. Positions 1245–1253 are catalytic loop; sequence GICDRHNDN. Residues 1264–1290 form an activation loop region; the sequence is HIDFGKFLGHAQMFGTFKRDRAPFVLT. Residues 1420-1536 form the PX domain; the sequence is GRIKEVSVFT…TFFHPLLRDE (117 aa). Residues 1486 to 1491 form an interaction with PtdIns(4,5)P2-containing membranes region; sequence RMVLGR. Serine 1551 bears the Phosphoserine mark. Residues 1554 to 1677 enclose the C2 domain; sequence TPGQIGGAVK…NLSKETVKWY (124 aa). The Nuclear localization signal signature appears at 1607–1618; that stretch reads SKRKTKISRKTR.

It belongs to the PI3/PI4-kinase family. Part of a complex with ERBB2 and EGFR. Interacts with clathrin trimers. Interacts with SBF2/MTMR13. It depends on Ca(2+) as a cofactor. Requires Mg(2+) as cofactor. Post-translationally, phosphorylated on Ser-259 during mitosis and upon UV irradiation; which does not change enzymatic activity but leads to proteasomal degradation. Phosphorylated upon insulin stimulation; which may lead to enzyme activation.

It is found in the cell membrane. Its subcellular location is the cytoplasmic vesicle. The protein localises to the clathrin-coated vesicle. The protein resides in the nucleus. It localises to the cytoplasm. It is found in the golgi apparatus. Its subcellular location is the trans-Golgi network. It catalyses the reaction a 1,2-diacyl-sn-glycero-3-phospho-(1D-myo-inositol 4-phosphate) + ATP = a 1,2-diacyl-sn-glycero-3-phospho-(1D-myo-inositol-3,4-bisphosphate) + ADP + H(+). The enzyme catalyses a 1,2-diacyl-sn-glycero-3-phospho-(1D-myo-inositol) + ATP = a 1,2-diacyl-sn-glycero-3-phospho-(1D-myo-inositol-3-phosphate) + ADP + H(+). It carries out the reaction a 1,2-diacyl-sn-glycero-3-phospho-(1D-myo-inositol-4,5-bisphosphate) + ATP = a 1,2-diacyl-sn-glycero-3-phospho-(1D-myo-inositol-3,4,5-trisphosphate) + ADP + H(+). Only slightly inhibited by wortmannin and LY294002. Activated by clathrin and insulin. In terms of biological role, generates phosphatidylinositol 3-phosphate (PtdIns3P) and phosphatidylinositol 3,4-bisphosphate (PtdIns(3,4)P2) that act as second messengers. Has a role in several intracellular trafficking events. Functions in insulin signaling and secretion. Required for translocation of the glucose transporter SLC2A4/GLUT4 to the plasma membrane and glucose uptake in response to insulin-mediated RHOQ activation. Regulates insulin secretion through two different mechanisms: involved in glucose-induced insulin secretion downstream of insulin receptor in a pathway that involves AKT1 activation and TBC1D4/AS160 phosphorylation, and participates in the late step of insulin granule exocytosis probably in insulin granule fusion. Synthesizes PtdIns3P in response to insulin signaling. Functions in clathrin-coated endocytic vesicle formation and distribution. Regulates dynamin-independent endocytosis, probably by recruiting EEA1 to internalizing vesicles. In neurosecretory cells synthesizes PtdIns3P on large dense core vesicles. Participates in calcium induced contraction of vascular smooth muscle by regulating myosin light chain (MLC) phosphorylation through a mechanism involving Rho kinase-dependent phosphorylation of the MLCP-regulatory subunit MYPT1. May play a role in the EGF signaling cascade. May be involved in mitosis and UV-induced damage response. Required for maintenance of normal renal structure and function by supporting normal podocyte function. Involved in the regulation of ciliogenesis and trafficking of ciliary components. The sequence is that of Phosphatidylinositol 4-phosphate 3-kinase C2 domain-containing subunit alpha (PIK3C2A) from Pongo abelii (Sumatran orangutan).